The chain runs to 274 residues: Kit ligand (274 aa).

The N-terminal stretch at 1 to 25 (MKKTQTWIITCIYLQLLLFNPLVHT) is a signal peptide. Position 26 is a pyrrolidone carboxylic acid (glutamine 26). Residues 26–215 (QGICSNRVTD…SNSIEDSSLQ (190 aa)) lie on the Extracellular side of the membrane. 2 disulfides stabilise this stretch: cysteine 29–cysteine 114 and cysteine 68–cysteine 164. N-linked (GlcNAc...) asparagine glycosylation is found at asparagine 90, asparagine 145, and asparagine 196. A helical membrane pass occupies residues 216 to 238 (WAAVALPAFFSLVIGFAFGAFYW). The Cytoplasmic portion of the chain corresponds to 239–274 (KKKQPNLTRTVENRQINEEDNEISMLQEKEREFQEV).

This sequence belongs to the SCF family. Homodimer, non-covalently linked. In terms of processing, a soluble form is produced by proteolytic processing of isoform 1 in the extracellular domain.

It localises to the cell membrane. The protein resides in the cytoplasm. The protein localises to the cytoskeleton. Its subcellular location is the cell projection. It is found in the lamellipodium. It localises to the filopodium. The protein resides in the secreted. Functionally, stimulates the proliferation of mast cells. Able to augment the proliferation of both myeloid and lymphoid hematopoietic progenitors in bone marrow culture. Also mediates cell-cell adhesion. Acts synergistically with other cytokines, probably interleukins. This chain is Kit ligand (KITLG), found in Bos taurus (Bovine).